The chain runs to 190 residues: UPF0301 protein Psyr_0485 (190 aa).

This sequence belongs to the UPF0301 (AlgH) family.

This Pseudomonas syringae pv. syringae (strain B728a) protein is UPF0301 protein Psyr_0485.